The primary structure comprises 236 residues: MRTIVVCSGGLDSVSLAHKIAAEQQLIGLVSFDYGQRHRKELDFAARCAARLAVPHHIIDISAIGGHLSGSALTDDIEVPDGHYAEETMKATVVPNRNAIMLAIAFGLAAAQKADAVAVAVHGGDHFIYPDCRPGFIDAFQRMQNEALDGYASVRLLAPYVEVSKAAIVTDGEKHATPFAETWSCYKGGRLHCGRCGTCVERREAFHLAGIPDPTEYEDQDFWKAAVSQYSAAEVR.

ATP is bound at residue Cys7–Ala17. The Zn(2+) site is built by Cys185, Cys193, Cys196, and Cys199.

It belongs to the QueC family. Requires Zn(2+) as cofactor.

The catalysed reaction is 7-carboxy-7-deazaguanine + NH4(+) + ATP = 7-cyano-7-deazaguanine + ADP + phosphate + H2O + H(+). It functions in the pathway purine metabolism; 7-cyano-7-deazaguanine biosynthesis. In terms of biological role, catalyzes the ATP-dependent conversion of 7-carboxy-7-deazaguanine (CDG) to 7-cyano-7-deazaguanine (preQ(0)). This Rhizobium leguminosarum bv. trifolii (strain WSM2304) protein is 7-cyano-7-deazaguanine synthase.